We begin with the raw amino-acid sequence, 44 residues long: Photosystem I reaction center subunit IX (44 aa).

The chain crosses the membrane as a helical span at residues 7 to 27 (YLSVAPVLATLWFGSLAGLLI).

Belongs to the PsaJ family.

Its subcellular location is the plastid. It is found in the chloroplast thylakoid membrane. Its function is as follows. May help in the organization of the PsaE and PsaF subunits. This chain is Photosystem I reaction center subunit IX, found in Illicium oligandrum (Star anise).